A 442-amino-acid chain; its full sequence is Septin-8 (442 aa).

Positions 1–16 are enriched in basic and acidic residues; sequence MAATDLERVSSAEPEP. A disordered region spans residues 1-23; that stretch reads MAATDLERVSSAEPEPRSLSLGG. An N-acetylalanine modification is found at Ala2. Position 10 is a phosphoserine (Ser10). One can recognise a Septin-type G domain in the interval 41–307; sequence QGFSFNILCV…ELYRRCKLEE (267 aa). The segment at 51–58 is G1 motif; the sequence is GETGIGKS. GTP contacts are provided by residues 51 to 58, Gly106, 187 to 195, Gly241, and Arg256; these read GETGIGKS and KADTISKSE. The interval 103–106 is G3 motif; sequence DAVG. Residues 186 to 189 form a G4 motif region; that stretch reads AKAD. Residues 322 to 410 adopt a coiled-coil conformation; sequence LQETYEAKRK…RKAAVEALQS (89 aa). A compositionally biased stretch (basic and acidic residues) spans 377 to 391; that stretch reads HQEEKRKVEEKRREL. Residues 377–442 are disordered; sequence HQEEKRKVEE…WSSIYSVTIP (66 aa). Polar residues-rich tracts occupy residues 408-420 and 432-442; these read LQSQ…SQQP and GWSSIYSVTIP.

The protein belongs to the TRAFAC class TrmE-Era-EngA-EngB-Septin-like GTPase superfamily. Septin GTPase family. Septins polymerize into heterooligomeric protein complexes that form filaments, and can associate with cellular membranes, actin filaments and microtubules. GTPase activity is required for filament formation. Interacts with CDK14, SEPTIN4, SEPTIN5 and SEPTIN7. Interacts with VAMP2; the interaction inhibits interaction of VAMP2 with SYP. Interacts with STX1A.

Its subcellular location is the cytoplasm. It localises to the cytoskeleton. It is found in the synapse. The protein resides in the cell projection. The protein localises to the axon. Its subcellular location is the cytoplasmic vesicle. It localises to the secretory vesicle. It is found in the synaptic vesicle membrane. The protein resides in the presynapse. Filament-forming cytoskeletal GTPase. May play a role in platelet secretion. Seems to participate in the process of SNARE complex formation in synaptic vesicles. The polypeptide is Septin-8 (Otolemur garnettii (Small-eared galago)).